We begin with the raw amino-acid sequence, 641 residues long: 1-deoxy-D-xylulose-5-phosphate synthase (641 aa).

Thiamine diphosphate is bound by residues histidine 79 and 120–122; that span reads GHS. Aspartate 151 contacts Mg(2+). Residues 152–153, asparagine 180, tyrosine 290, and glutamate 372 contribute to the thiamine diphosphate site; that span reads GS. Residue asparagine 180 coordinates Mg(2+).

Belongs to the transketolase family. DXPS subfamily. In terms of assembly, homodimer. It depends on Mg(2+) as a cofactor. The cofactor is thiamine diphosphate.

It carries out the reaction D-glyceraldehyde 3-phosphate + pyruvate + H(+) = 1-deoxy-D-xylulose 5-phosphate + CO2. Its pathway is metabolic intermediate biosynthesis; 1-deoxy-D-xylulose 5-phosphate biosynthesis; 1-deoxy-D-xylulose 5-phosphate from D-glyceraldehyde 3-phosphate and pyruvate: step 1/1. Functionally, catalyzes the acyloin condensation reaction between C atoms 2 and 3 of pyruvate and glyceraldehyde 3-phosphate to yield 1-deoxy-D-xylulose-5-phosphate (DXP). The chain is 1-deoxy-D-xylulose-5-phosphate synthase from Rhodopseudomonas palustris (strain TIE-1).